Reading from the N-terminus, the 130-residue chain is MKILVAVAVIFFISTQLSAEEIGANDDFNYWSDWSDSDQIKEEMPEPFEHLLQRIARRPKPQQFFGLMGKRDADSSIEKQVALLKALYGHGQLSHKRHKTDSFVGLMGKRALNSVAYERSVMQDYERRRK.

Residues 1 to 19 (MKILVAVAVIFFISTQLSA) form the signal peptide. Residues 20 to 56 (EEIGANDDFNYWSDWSDSDQIKEEMPEPFEHLLQRIA) constitute a propeptide that is removed on maturation. Met-68 and Met-107 each carry methionine amide.

The protein belongs to the tachykinin family. The substance P form is cleaved at Pro-59 by the prolyl endopeptidase FAP (seprase) activity (in vitro). Substance P is also cleaved and degraded by Angiotensin-converting enzyme (ACE) and neprilysin (MME).

It localises to the secreted. Functionally, tachykinins are active peptides which excite neurons, evoke behavioral responses, are potent vasodilators and secretagogues, and contract (directly or indirectly) many smooth muscles. The chain is Protachykinin-1 (TAC1) from Bos taurus (Bovine).